A 67-amino-acid polypeptide reads, in one-letter code: Epsilon-conotoxin TxVA (67 aa).

The N-terminal stretch at 1–19 (MRCFPVFIILLLLIASAPC) is a signal peptide. The propeptide occupies 20–50 (FDARTKTDDDVPLSSLRDNLKRTIRTRLNIR). Residues glutamate 51 and glutamate 54 each carry the 4-carboxyglutamate modification. 2 disulfides stabilise this stretch: cysteine 52-cysteine 58 and cysteine 53-cysteine 59. 6'-bromotryptophan is present on tryptophan 57. An O-linked (GalNAc...) threonine glycan is attached at threonine 60. Proline 63 carries the 4-hydroxyproline modification. Residues 64–67 (LTGR) constitute a propeptide that is removed on maturation.

O-glycan consists of the disaccharide Gal-GalNAc. In terms of tissue distribution, expressed by the venom duct.

It localises to the secreted. Its function is as follows. Epsilon-conotoxins act at presynaptic membranes, blocking the calcium channels or G protein-coupled receptors. Causes hyperactivity upon intracranial injection into mice. Causes dorsal fins drooping in fish. This is Epsilon-conotoxin TxVA from Conus textile (Cloth-of-gold cone).